The sequence spans 365 residues: P2Y purinoceptor 4 (365 aa).

Over 1 to 34 (MASTESSLLRSLGLSPGPGSSEVELDCWFDEDFK) the chain is Extracellular. A helical transmembrane segment spans residues 35 to 61 (FILLPVSYAVVFVLGLGLNAPTLWLFI). Residues 62 to 72 (FRLRPWDATAT) are Cytoplasmic-facing. Residues 73 to 95 (YMFHLALSDTLYVLSLPTLIYYY) form a helical membrane-spanning segment. The Extracellular segment spans residues 96-112 (AAHNHWPFGTEICKFVR). A disulfide bond links Cys108 and Cys185. A helical membrane pass occupies residues 113–131 (FLFYWNLYCSVLFLTCISV). Topologically, residues 132–154 (HRYLGICHPLRALRWGRPRLAGL) are cytoplasmic. Residues 155–174 (LCLAVWLVVAGCLVPNLFFV) form a helical membrane-spanning segment. The Extracellular segment spans residues 175-196 (TTSNKGTTVLCHDTTRPEEFDH). A helical membrane pass occupies residues 197-222 (YVHFSSAVMGLLFGVPCLVTLVCYGL). Topologically, residues 223–246 (MARRLYQPLPGSAQSSSRLRSLRT) are cytoplasmic. Residues 247–269 (IAVVLTVFAVCFVPFHITRTIYY) traverse the membrane as a helical segment. The Extracellular segment spans residues 270–287 (LARLLEADCRVLNIVNVV). The helical transmembrane segment at 288-309 (YKVTRPLASANSCLDPVLYLLT) threads the bilayer. Residues 310–365 (GDKYRRQLRQLCGGGKPQPRTAASSLALVSLPEDSSCRWAATPQDSSCSTPRADRL) lie on the Cytoplasmic side of the membrane. Phosphoserine occurs at positions 333 and 334.

It belongs to the G-protein coupled receptor 1 family. In terms of processing, phosphorylation of Ser-333 and Ser-334 is a key step in agonist-dependent desensitization and loss of surface P2RY4. This phosphorylation does not involve PKC, nor other calcium activated kinases. Pancreas.

The protein localises to the cell membrane. Receptor for UTP and UDP coupled to G-proteins that activate a phosphatidylinositol-calcium second messenger system. Not activated by ATP or ADP. In Homo sapiens (Human), this protein is P2Y purinoceptor 4 (P2RY4).